The chain runs to 184 residues: Troponin I, slow skeletal muscle (184 aa).

Position 1 is an N-acetylproline; partial (P1). An involved in binding TNC region spans residues 1–45 (PEVERKSKITASRKLLKSLMLAKAKECQQEHEAREAEKVRYLAER). S55 bears the Phosphoserine mark. The segment at 94-115 (LKLKVLDLRGKFKRPPLRRVRV) is involved in binding TNC and actin.

This sequence belongs to the troponin I family. Binds to actin and tropomyosin. In the muscle sample, approximately 25% of the chains were blocked. Pro-1 is probably acetylated. In terms of processing, the N-terminus is blocked.

In terms of biological role, troponin I is the inhibitory subunit of troponin, the thin filament regulatory complex which confers calcium-sensitivity to striated muscle actomyosin ATPase activity. This chain is Troponin I, slow skeletal muscle (TNNI1), found in Oryctolagus cuniculus (Rabbit).